A 338-amino-acid chain; its full sequence is Glyceraldehyde-3-phosphate dehydrogenase (338 aa).

NAD(+) is bound by residues 12 to 13 (RI), D34, and R80. D-glyceraldehyde 3-phosphate-binding positions include 151–153 (SCT), T182, 211–212 (TG), and R234. The active-site Nucleophile is C152. Residue N316 coordinates NAD(+).

The protein belongs to the glyceraldehyde-3-phosphate dehydrogenase family. As to quaternary structure, homotetramer.

The protein resides in the cytoplasm. It catalyses the reaction D-glyceraldehyde 3-phosphate + phosphate + NAD(+) = (2R)-3-phospho-glyceroyl phosphate + NADH + H(+). It functions in the pathway carbohydrate degradation; glycolysis; pyruvate from D-glyceraldehyde 3-phosphate: step 1/5. This Paracoccidioides lutzii (strain ATCC MYA-826 / Pb01) (Paracoccidioides brasiliensis) protein is Glyceraldehyde-3-phosphate dehydrogenase (GPD).